The chain runs to 133 residues: Ribosome-binding factor A (133 aa).

This sequence belongs to the RbfA family. In terms of assembly, monomer. Binds 30S ribosomal subunits, but not 50S ribosomal subunits or 70S ribosomes.

It localises to the cytoplasm. Functionally, one of several proteins that assist in the late maturation steps of the functional core of the 30S ribosomal subunit. Associates with free 30S ribosomal subunits (but not with 30S subunits that are part of 70S ribosomes or polysomes). Required for efficient processing of 16S rRNA. May interact with the 5'-terminal helix region of 16S rRNA. The chain is Ribosome-binding factor A from Bordetella bronchiseptica (strain ATCC BAA-588 / NCTC 13252 / RB50) (Alcaligenes bronchisepticus).